The sequence spans 160 residues: MKTKAIYPGTFDPVTYGHIDIVTRAADMFDHVLFAIANSARKNPMFTLDERITLAKEVTSHLDNVEVIGFCELMANFAKKQQANILIRGLRSVSDFEYEWQLANMNRHFMPELESVFLLPSQNLSFLSSSLIKDVALHDGDISSFLPEPIAQAMLKKLGK.

Threonine 10 provides a ligand contact to substrate. Residues 10–11 (TF) and histidine 18 contribute to the ATP site. Substrate-binding residues include lysine 42, methionine 74, and arginine 88. Residues 89–91 (GLR), glutamate 99, and 124–130 (LSFLSSS) each bind ATP.

The protein belongs to the bacterial CoaD family. In terms of assembly, homohexamer. It depends on Mg(2+) as a cofactor.

The protein resides in the cytoplasm. It catalyses the reaction (R)-4'-phosphopantetheine + ATP + H(+) = 3'-dephospho-CoA + diphosphate. Its pathway is cofactor biosynthesis; coenzyme A biosynthesis; CoA from (R)-pantothenate: step 4/5. Its function is as follows. Reversibly transfers an adenylyl group from ATP to 4'-phosphopantetheine, yielding dephospho-CoA (dPCoA) and pyrophosphate. This is Phosphopantetheine adenylyltransferase from Photorhabdus laumondii subsp. laumondii (strain DSM 15139 / CIP 105565 / TT01) (Photorhabdus luminescens subsp. laumondii).